The sequence spans 469 residues: Regulator of G-protein signaling 7 (469 aa).

In terms of domain architecture, DEP spans 37–112 (EKNGIPIRTV…DDGTFYRFQT (76 aa)). Phosphoserine is present on residues serine 229 and serine 241. Residues 236-255 (DIRSHSPTHTPTPETKPPTE) are disordered. Residue threonine 243 is modified to Phosphothreonine. A G protein gamma domain is found at 255–316 (EDELHQQIKY…LSDDTTFWEL (62 aa)). The 116-residue stretch at 333-448 (GMDEALKDPV…IRSSAYQELL (116 aa)) folds into the RGS domain. Serine 434 is modified (phosphoserine).

In terms of assembly, interacts with GNB5, forming the RGS7-GNB5 complex. Interacts with GPR158; promotes the GTPase activator activity of the RGS7-GNB5 complex in absence of glycine, in contrast GTPase activator activity of the RGS7-GNB5 complex is inhibited in presence of glycine. Interacts with GPR179. Interacts with PKD1; this prevents rapid proteasomal degradation. Interacts with RGS7BP, leading to regulate the subcellular location of the heterodimer formed with GNB5. Interacts (phosphorylated form) with 14-3-3 protein YWHAQ. Interacts with SNAPIN. Interacts with GNAI1. Interacts with GNAO1, GNAI3 and GNAZ. Post-translationally, palmitoylated. In terms of processing, ubiquitinated, leading to rapid proteasomal degradation. Phosphorylation and subsequent interaction with 14-3-3 proteins inhibits GAP activity. Detected in brain (at protein level).

It is found in the cytoplasm. Its subcellular location is the cytosol. The protein resides in the cell membrane. It localises to the membrane. Its function is as follows. GTPase activator component of the RGS7-GNB5 complex that regulates G protein-coupled receptor signaling cascades. The RGS7-GNB5 complex acts as an inhibitor signal transduction by promoting the GTPase activity of G protein alpha subunits, such as GNAO1, thereby driving them into their inactive GDP-bound form. May play a role in synaptic vesicle exocytosis. Glycine-dependent regulation of the RGS7-GNB5 complex by GPR158 affects mood and cognition via its ability to regulate neuronal excitability in L2/L3 pyramidal neurons of the prefrontal cortex. Modulates the activity of potassium channels that are activated by GNAO1 in response to muscarinic acetylcholine receptor M2/CHRM2 signaling. This is Regulator of G-protein signaling 7 (Rgs7) from Mus musculus (Mouse).